The sequence spans 436 residues: RNA polymerase sigma-54 factor (436 aa).

Residues 324-343 (TLREVADCLSLHESTVSRAI) constitute a DNA-binding region (H-T-H motif). The RPON box motif lies at 413–421 (SRRTVAKYR).

It belongs to the sigma-54 factor family. As to quaternary structure, interacts transiently with the RNAP core.

Functionally, sigma factors are initiation factors that promote the attachment of RNA polymerase (RNAP) to specific initiation sites and are then released. This sigma factor is responsible for the expression of the levanase operon. The open complex (sigma-54 and core RNA polymerase) serves as the receptor for receipt of the melting signal from the remotely bound activator protein LevR for the expression of the levanase operon. Associates with the RNAP core only in stationary phase cells. The chain is RNA polymerase sigma-54 factor (sigL) from Bacillus subtilis (strain 168).